A 387-amino-acid chain; its full sequence is Formate-dependent phosphoribosylglycinamide formyltransferase (387 aa).

Residues Glu-15–Leu-16 and Glu-75 contribute to the N(1)-(5-phospho-beta-D-ribosyl)glycinamide site. ATP-binding positions include Arg-106, Lys-147, Ser-152–Gln-157, Glu-187–Ile-190, and Glu-195. Residues Asp-111–Leu-301 form the ATP-grasp domain. Residues Glu-260 and Glu-272 each contribute to the Mg(2+) site. N(1)-(5-phospho-beta-D-ribosyl)glycinamide is bound by residues Asp-279, Lys-349, and Arg-356–Arg-357.

Belongs to the PurK/PurT family. In terms of assembly, homodimer.

It carries out the reaction N(1)-(5-phospho-beta-D-ribosyl)glycinamide + formate + ATP = N(2)-formyl-N(1)-(5-phospho-beta-D-ribosyl)glycinamide + ADP + phosphate + H(+). It participates in purine metabolism; IMP biosynthesis via de novo pathway; N(2)-formyl-N(1)-(5-phospho-D-ribosyl)glycinamide from N(1)-(5-phospho-D-ribosyl)glycinamide (formate route): step 1/1. Functionally, involved in the de novo purine biosynthesis. Catalyzes the transfer of formate to 5-phospho-ribosyl-glycinamide (GAR), producing 5-phospho-ribosyl-N-formylglycinamide (FGAR). Formate is provided by PurU via hydrolysis of 10-formyl-tetrahydrofolate. The polypeptide is Formate-dependent phosphoribosylglycinamide formyltransferase (Prochlorococcus marinus (strain NATL1A)).